Consider the following 265-residue polypeptide: MVSPDLIRNMVGIVGNIISFGLFLSPVPTFYRIIKNKDVQDFKADPYLATLLNCMLWVFYGLPIVHPNSILVVTINGIGLVIEAVYLTIFFLFSDKKNKKKMGVVLATEALFMAAVVLGVLLGAHTHQRRSLIVGILCVIFGTIMYSSPLTIMSQVVKTKSVEYMPLLLSVVSFLNGLCWTSYALIRLDIFITIPNGLGVLFALMQLILYAIYYRTIPKKQDKNLELPTVAPVAKDTSIVTPVSKDDDVDGGNASHVTINITIEL.

At 1 to 9 the chain is on the extracellular side; the sequence is MVSPDLIRN. The helical transmembrane segment at 10–30 threads the bilayer; the sequence is MVGIVGNIISFGLFLSPVPTF. The MtN3/slv 1 domain occupies 10–97; it reads MVGIVGNIIS…TIFFLFSDKK (88 aa). Residues 31–45 lie on the Cytoplasmic side of the membrane; sequence YRIIKNKDVQDFKAD. The chain crosses the membrane as a helical span at residues 46–66; it reads PYLATLLNCMLWVFYGLPIVH. Residues 67-69 lie on the Extracellular side of the membrane; sequence PNS. A helical transmembrane segment spans residues 70-90; the sequence is ILVVTINGIGLVIEAVYLTIF. At 91-101 the chain is on the cytoplasmic side; sequence FLFSDKKNKKK. A helical transmembrane segment spans residues 102-122; it reads MGVVLATEALFMAAVVLGVLL. Residues 123–131 are Extracellular-facing; the sequence is GAHTHQRRS. The chain crosses the membrane as a helical span at residues 132–152; it reads LIVGILCVIFGTIMYSSPLTI. A MtN3/slv 2 domain is found at 133 to 215; that stretch reads IVGILCVIFG…QLILYAIYYR (83 aa). At 153–165 the chain is on the cytoplasmic side; it reads MSQVVKTKSVEYM. The chain crosses the membrane as a helical span at residues 166 to 186; that stretch reads PLLLSVVSFLNGLCWTSYALI. Residues 187–189 are Extracellular-facing; that stretch reads RLD. A helical transmembrane segment spans residues 190–210; that stretch reads IFITIPNGLGVLFALMQLILY. Over 211 to 265 the chain is Cytoplasmic; that stretch reads AIYYRTIPKKQDKNLELPTVAPVAKDTSIVTPVSKDDDVDGGNASHVTINITIEL.

It belongs to the SWEET sugar transporter family. In terms of assembly, forms homooligomers and/or heterooligomers.

Its subcellular location is the cell membrane. In terms of biological role, mediates both low-affinity uptake and efflux of sugar across the plasma membrane. This Oryza sativa subsp. japonica (Rice) protein is Bidirectional sugar transporter SWEET7b (SWEET7B).